The primary structure comprises 204 residues: MKNESTFIDVPADSSSAMKGKAPLIGVAKDHTASGSGGYNRGLSIFDFLLRLAAIVAASVAAGTMFTSDETLPFFTQFLQFQAGYDDLPTFQFFVISMSLVSGYIVLSLPISVVTIVRPLAAAPRLLLLVLDTAVMGLTMAAASSAAAISYVAHNGNQNTNWLPICQQFGDFCQKTSGGCGLFLCRRRVFHDPGCPLRSRSQRH.

The Cytoplasmic segment spans residues 1-41 (MKNESTFIDVPADSSSAMKGKAPLIGVAKDHTASGSGGYNR). A helical transmembrane segment spans residues 42 to 62 (GLSIFDFLLRLAAIVAASVAA). The Extracellular segment spans residues 63–92 (GTMFTSDETLPFFTQFLQFQAGYDDLPTFQ). A helical transmembrane segment spans residues 93-113 (FFVISMSLVSGYIVLSLPISV). The Cytoplasmic portion of the chain corresponds to 114–125 (VTIVRPLAAAPR). Residues 126–146 (LLLLVLDTAVMGLTMAAASSA) form a helical membrane-spanning segment. Over 147 to 204 (AAISYVAHNGNQNTNWLPICQQFGDFCQKTSGGCGLFLCRRRVFHDPGCPLRSRSQRH) the chain is Extracellular.

It belongs to the Casparian strip membrane proteins (CASP) family. As to quaternary structure, homodimer and heterodimers.

The protein resides in the cell membrane. Its function is as follows. Regulates membrane-cell wall junctions and localized cell wall deposition. Required for establishment of the Casparian strip membrane domain (CSD) and the subsequent formation of Casparian strips, a cell wall modification of the root endodermis that determines an apoplastic barrier between the intraorganismal apoplasm and the extraorganismal apoplasm and prevents lateral diffusion. This Raphanus sativus (Radish) protein is Casparian strip membrane protein 3.